The primary structure comprises 860 residues: Transcription factor E2F8 (860 aa).

2 disordered regions span residues 1-27 (MENQ…PSSK) and 38-57 (DLGP…GEPW). Phosphoserine is present on residues serine 71 and serine 102. 2 consecutive DNA-binding regions follow at residues 113 to 182 (RKEK…TWHG) and 261 to 347 (RKDK…KWTG). Disordered stretches follow at residues 407 to 433 (RRKI…PPVP), 532 to 616 (LTPP…PKED), and 745 to 803 (QMSA…QPVP). Phosphoserine is present on residues serine 412 and serine 416. Polar residues-rich tracts occupy residues 412–429 (SAPS…SQNS) and 542–554 (VCPT…TGSK). Residues 555-565 (DPTDAPAEKTA) show a composition bias toward basic and acidic residues.

It belongs to the E2F/DP family. As to quaternary structure, interacts with HIF1A. Homodimer and heterodimer: mainly forms homodimers and, to a lesser extent, heterodimers with E2F8. Dimerization is important for DNA-binding. In terms of tissue distribution, highly expressed in liver, skin, thymus and testis. Expressed in trophoblast giant cells throughout placenta development (at protein level).

Its subcellular location is the nucleus. Its function is as follows. Atypical E2F transcription factor that participates in various processes such as angiogenesis and polyploidization of specialized cells. Mainly acts as a transcription repressor that binds DNA independently of DP proteins and specifically recognizes the E2 recognition site 5'-TTTC[CG]CGC-3'. Directly represses transcription of classical E2F transcription factors such as E2F1: component of a feedback loop in S phase by repressing the expression of E2F1, thereby preventing p53/TP53-dependent apoptosis. Plays a key role in polyploidization of cells in placenta and liver by regulating the endocycle, probably by repressing genes promoting cytokinesis and antagonizing action of classical E2F proteins (E2F1, E2F2 and/or E2F3). Required for placental development by promoting polyploidization of trophoblast giant cells. Acts as a promoter of sprouting angiogenesis, possibly by acting as a transcription activator: associates with HIF1A, recognizes and binds the VEGFA promoter, which is different from canonical E2 recognition site, and activates expression of the VEGFA gene. This is Transcription factor E2F8 (E2f8) from Mus musculus (Mouse).